A 2656-amino-acid chain; its full sequence is MAESFQQLGVGSKSNERSFFSKFFGTDDSQKDFGPLPEIEYSDEQRFNPYPAIYEKKNNNNNNNNNNNNNNNNNNNNNNNNNNNNNNNSNGNGNRSNSSLNNSNNNNQVRRTHSPSVSNKSDESNTTNTNTNITTNTNITTNTNTNTNTNSTNNDTSSNVTQQQLLTNLGQSKIISALKTKFQRPLPPVDDKKFWMPDHSSAVCYECSEEFTTFKRRHHCRLCGQIFCWKCSQKTLTDGKGERVRVCNFCYRRYMAPDDLDMEGYHYDPITGTVISLITNNDDGTNLNNGNGLIKLDGSTHNMNVSLGNSGDNSSFVQSPNNNFSQSPTFSQQQQQQQQQQQQQQQQQQQQQQQQTTGVMSGLNPFSNSTLLFGRNNNNNNQQQQQPIIEEDKQYYGDINTSYNNSYFNNNGFNNFNNEHYNNTNFNATSLNLNSQLHSNLLANTNGELFYDNSQHSISNYGNLDHHQQQQQSNSHGSLSATPSNTPSGLISPIVGAPSILDPNKMIFYSDQEGNYDNLDDYETSSSDGSDNDNEDNHLKSSHSSANDLGTSNTVSTGESNSESKLSSSSNDISIHHHHYHHHHHHSHGNLLKSNSLTPLNLNNNNIIINNNNINNNNNNDNGNDDNNNNNNDNNNNTTIEVDPRHSMPSKTSNTSFSMASLPSIFKLPTIGRNNNNNNNSGSGNSQYLSANSNASNSISPPNSARGSSSNPNSMTPTPTLSSSFSNLPNAETSPPSLVKAKQQQQQQQQQQQQPQPVLQPTIHHPLKTSLPMFSTQSPPPPTNQLAQSTSMAPPPSIFSPLGKLQALSHPSSSSNNQQQQQPQIVKPIIIAPNSLFFSDPSIVSLKSHPKTTNKTKFLEKYPLPKKYYESTENIIDTFGFKRTPSTEGNLLSQMLATSKQKEFDEKERLKISNNPQMSVYIQHINNLVSEQLEKNNIDLSWRSIIIDLTKKATDNVKIFVRKGDKMSTNEYIKIKKIPGGNKSECNYVDGVVMTKILTHKKMKDKFINPKILLLSCSVEFQRVENKFLYFDQLLQQEKEYLRILVSKIAERKPDLVLVEKTVSRHAQDFLLDAGISLALNVKPKLLERLGRCLGGEVLPTLDIIYNNNSNNNNSNSIQLQQQQNSNSPASLQNSTTTTNNNNNNNNNSTTLGSCGQFKVITYSEIGLKEKEILGKKTLMYFEKCPVELGATIIIRGEDLAVLKIIKKILKLSIFSMHNAYLELKYLNDQSSTSNLLFVNNNGQNLSCSPQIKFPLPKTYPTIPWKYQFTSQHIPVKKALLTSFYKPHSDFGQQQSVIQWTSDDEVLGIGTSDAFKHCDMKFPIENESIYDHQSIVFSHSIFCNSNQCIPFEIHAIDYYTDNDLTLGEFLSKFCFSLHICNIKECNRPLIEHERTFMNSTTRINICVQKTQTIQDRPTNSSPAQQRNQPVQRAGINVINLCKICNKFSPESPMSEEAWEMSFGKFLELCFFGFLPIKTGISPECSHNNAKDHISYFYYQDLAAIFSYEPLPSLELSLPPKNLKATYTEKQRQSVRAKELEIMNQCANQVYSAIHERLYEIGQENQGDRVQELIPSLVQEKQLICSKIESLLLLPESAHKSNDQIINLTKLLYANFMTWNSQLTGLIDSTSYQRSKRNVQQQQQQQQHQQSQQPQPQILIGGDVYSDSHLHTDSVKKINSKQHSHNTILLQSIQSNQEQQLEQQEEFEINVNNNNNNNNNNNNNNNNNNNNNNNNNNNNNNNNNNNNTIDNKSENENENKNENKNENENENENKNENKNENENENKKENENQLEIKNENNDSGEEITNNNNNNNNNNNNNNNNNNNNNNNIDNNNNKDENISSTPLLSPSSVLGVSNSGINQAFLNAPNNTYNSVEQDLTLPLNHQSLNFAVGGLVSPGSSSGGLPVGSVPNSSSMPSIHNGGSGNIPSNLVGSASGLSTNYSPNALKDPKKLKIIDTIAGIVSSISQTRILGPTMPYLLLESTDNVALFENEPSTTIAYTLSSSDFKIALNSLLDEEWKRISEIEKQYELQQQQQQDSQDLESSSQQQQQQQQQQQEQQEQPSLPTPSHPLSQSMNFSPSSLLKISSSSLPKDNNNSSENKPNSETNDIVRSRGSVKLSGSPISISPLSNAFEKRKSTSLSSSANNSPISSILEKEKKLKQQSPSLSNSLSGQTIINNNQQQQQQQQPSPIIIDEKDDRNTEKSSIIETDSIIEDLNINQDESNITNEDGGKIGDYESELLYDHHQQGDSENNNNNNNNNNNNNNNNNNNNNNNNNNNTNNNNEQQINNSDTEGDSDSIKSSNSNIYSEKNIKLSKLMVSTQRKEIRSRFKFEKNGYELNIFCSSYYPVQFHALREYMCGDQEFIQSLTRSKIWNAKGGKSGSSWNKTLDDRFILKQVSRIELESFLDFAPLYFEYICKSFLNQIPTALCKILGVFTVRWKDSNGKALKKDLIVMENLFHSKCISKTYDLKGSLRGRLVKNESEVLLDENLLQASFASPICLGEYDKTRVALAVWNDTAFLSSLNVMDYSLLSGIDNQSNQLVVGIIDYMRKFTWDKALEMKVKQSGIMGGGGKVPTVISPKQYKLRFRDAMWLYFTLSPDKFTKVKHLMPYEKKKNNNNNYNYNNFNNNNFNNNNNISNNGNGNINQRQVQQINK.

The interval 24-159 (FGTDDSQKDF…NSTNNDTSSN (136 aa)) is disordered. Composition is skewed to low complexity over residues 59 to 107 (NNNN…NNNN) and 124 to 159 (SNTT…TSSN). The FYVE-type zinc finger occupies 198 to 255 (DHSSAVCYECSEEFTTFKRRHHCRLCGQIFCWKCSQKTLTDGKGERVRVCNFCYRRYM). Zn(2+) contacts are provided by C204, C207, C220, C223, C228, C231, C247, and C250. The span at 304-331 (NVSLGNSGDNSSFVQSPNNNFSQSPTFS) shows a compositional bias: polar residues. Disordered regions lie at residues 304–383 (NVSL…NNQQ), 465–495 (DHHQ…SPIV), 517–570 (DNLD…SSSS), 618–657 (NNND…NTSF), 670–823 (TIGR…QQQP), 1115–1150 (SNSI…NNST), 1633–1659 (RSKR…QILI), 1710–1844 (VNNN…SSTP), 2031–2127 (QQQQ…SISP), 2179–2208 (NQQQ…SIIE), 2246–2304 (QQGD…SSNS), and 2617–2656 (NNNN…QINK). The span at 332 to 355 (QQQQQQQQQQQQQQQQQQQQQQQQ) shows a compositional bias: low complexity. Polar residues-rich tracts occupy residues 356 to 371 (TTGV…NSTL), 473 to 489 (SNSH…TPSG), and 542 to 557 (SHSS…TVST). Low complexity-rich tracts occupy residues 558–570 (GESN…SSSS), 618–637 (NNND…NNNN), 674–730 (NNNN…NLPN), 743–757 (QQQQ…QPQP), and 811–823 (PSSS…QQQP). Low complexity-rich tracts occupy residues 1639–1656 (QQQQ…PQPQ) and 1710–1746 (VNNN…NNNN). 2 coiled-coil regions span residues 1741–1823 (NNNN…NNNN) and 2019–2061 (KRIS…QQEQ). The segment covering 1750–1798 (NKSENENENKNENKNENENENENKNENKNENENENKKENENQLEIKNEN) has biased composition (basic and acidic residues). Composition is skewed to low complexity over residues 1807 to 1833 (NNNN…IDNN), 2031 to 2061 (QQQQ…QQEQ), 2078 to 2107 (SPSS…SETN), and 2118 to 2127 (LSGSPISISP). The span at 2193 to 2202 (IDEKDDRNTE) shows a compositional bias: basic and acidic residues. Low complexity-rich tracts occupy residues 2252-2283 (NNNN…NNNN) and 2618-2647 (NNNN…GNIN). One can recognise a PIPK domain in the interval 2275 to 2596 (NNNNTNNNNE…RFRDAMWLYF (322 aa)).

The protein localises to the endosome membrane. It localises to the early endosome membrane. The protein resides in the cytoplasmic vesicle. Its subcellular location is the phagosome membrane. It is found in the late endosome membrane. The catalysed reaction is a 1,2-diacyl-sn-glycero-3-phospho-(1D-myo-inositol-3-phosphate) + ATP = a 1,2-diacyl-sn-glycero-3-phospho-(1D-myo-inositol-3,5-bisphosphate) + ADP + H(+). It carries out the reaction a 1,2-diacyl-sn-glycero-3-phospho-(1D-myo-inositol) + ATP = a 1,2-diacyl-sn-glycero-3-phospho-(1D-myo-inositol-5-phosphate) + ADP + H(+). The enzyme catalyses L-seryl-[protein] + ATP = O-phospho-L-seryl-[protein] + ADP + H(+). Functionally, dual specificity kinase part of the PI(3,5)P2 regulatory complex which regulates both the synthesis and turnover of phosphatidylinositol 3,5-bisphosphate (PtdIns(3,5)P2). Catalyzes the phosphorylation of phosphatidylinositol 3-phosphate on the fifth hydroxyl of the myo-inositol ring, to form phosphatidylinositol 3,5-bisphosphate. In Dictyostelium discoideum (Social amoeba), this protein is 1-phosphatidylinositol 3-phosphate 5-kinase (pip5k3).